A 901-amino-acid polypeptide reads, in one-letter code: Protein translocase subunit SecA (901 aa).

Residues Gln87, 105 to 109 (GEGKT), and Asp512 contribute to the ATP site. The tract at residues 859–901 (HQDDDSAAAAALAAQTGERKVGRNDPCPCGSGKKYKQCHGRLQ) is disordered. 4 residues coordinate Zn(2+): Cys885, Cys887, Cys896, and His897. Residues 891–901 (KKYKQCHGRLQ) show a composition bias toward basic residues.

This sequence belongs to the SecA family. Monomer and homodimer. Part of the essential Sec protein translocation apparatus which comprises SecA, SecYEG and auxiliary proteins SecDF-YajC and YidC. The cofactor is Zn(2+).

It localises to the cell inner membrane. The protein resides in the cytoplasm. It catalyses the reaction ATP + H2O + cellular proteinSide 1 = ADP + phosphate + cellular proteinSide 2.. Part of the Sec protein translocase complex. Interacts with the SecYEG preprotein conducting channel. Has a central role in coupling the hydrolysis of ATP to the transfer of proteins into and across the cell membrane, serving both as a receptor for the preprotein-SecB complex and as an ATP-driven molecular motor driving the stepwise translocation of polypeptide chains across the membrane. This chain is Protein translocase subunit SecA, found in Escherichia coli O6:K15:H31 (strain 536 / UPEC).